Reading from the N-terminus, the 320-residue chain is Bifunctional phosphoglucose/phosphomannose isomerase (320 aa).

An SIS domain is found at 20–153; it reads IAKDLTPYKG…NLLGVDKDEL (134 aa). Positions 37, 38, 80, 82, 85, and 132 each coordinate D-fructose 6-phosphate. The Proton acceptor role is filled by glutamate 204. Residues histidine 220 and lysine 313 each coordinate D-fructose 6-phosphate. Histidine 220 acts as the Proton donor in catalysis. Lysine 313 (proton acceptor) is an active-site residue.

It belongs to the PGI/PMI family. In terms of assembly, homodimer.

It carries out the reaction alpha-D-glucose 6-phosphate = beta-D-fructose 6-phosphate. The catalysed reaction is D-mannose 6-phosphate = D-fructose 6-phosphate. Its function is as follows. Dual specificity isomerase that catalyzes the isomerization of both glucose-6-phosphate and mannose-6-phosphate to fructose-6-phosphate. This chain is Bifunctional phosphoglucose/phosphomannose isomerase, found in Aquifex aeolicus (strain VF5).